The following is a 144-amino-acid chain: Ribonuclease VapC45 (144 aa).

2 residues coordinate Mg(2+): Asp7 and Asp102.

It belongs to the PINc/VapC protein family. Mg(2+) is required as a cofactor.

Its function is as follows. Toxic component of a type II toxin-antitoxin (TA) system. An RNase. Its cognate antitoxin is VapB45. This Mycobacterium tuberculosis (strain CDC 1551 / Oshkosh) protein is Ribonuclease VapC45.